The chain runs to 874 residues: Alanine--tRNA ligase (874 aa).

Residues histidine 563, histidine 567, cysteine 664, and histidine 668 each contribute to the Zn(2+) site.

This sequence belongs to the class-II aminoacyl-tRNA synthetase family. The cofactor is Zn(2+).

Its subcellular location is the cytoplasm. The catalysed reaction is tRNA(Ala) + L-alanine + ATP = L-alanyl-tRNA(Ala) + AMP + diphosphate. In terms of biological role, catalyzes the attachment of alanine to tRNA(Ala) in a two-step reaction: alanine is first activated by ATP to form Ala-AMP and then transferred to the acceptor end of tRNA(Ala). Also edits incorrectly charged Ser-tRNA(Ala) and Gly-tRNA(Ala) via its editing domain. This Methylobacillus flagellatus (strain ATCC 51484 / DSM 6875 / VKM B-1610 / KT) protein is Alanine--tRNA ligase.